Reading from the N-terminus, the 346-residue chain is Elongation factor Ts (346 aa).

Residues 80–83 (TDFV) form an involved in Mg(2+) ion dislocation from EF-Tu region.

Belongs to the EF-Ts family.

It is found in the cytoplasm. Functionally, associates with the EF-Tu.GDP complex and induces the exchange of GDP to GTP. It remains bound to the aminoacyl-tRNA.EF-Tu.GTP complex up to the GTP hydrolysis stage on the ribosome. This chain is Elongation factor Ts, found in Streptococcus pyogenes serotype M1.